Consider the following 2513-residue polypeptide: Highly reducing polyketide synthase ACRTS2 (2513 aa).

The Ketosynthase family 3 (KS3) domain maps to 4–429; sequence DTPVAIIGVS…GSSSAVIIDR (426 aa). Residues C174, H313, and H353 each act as for beta-ketoacyl synthase activity in the active site. The interval 547–875 is malonyl-CoA:ACP transacylase (MAT) domain; sequence VFTGQGAQYA…NYLPSLLRGT (329 aa). The For malonyltransferase activity role is filled by S635. The N-terminal hotdog fold stretch occupies residues 942–1074; it reads HALIGRKAPS…GKIEPEIADL (133 aa). The tract at residues 942–1253 is dehydratase (DH) domain; that stretch reads HALIGRKAPS…TFRTVSSADD (312 aa). The region spanning 942-1254 is the PKS/mFAS DH domain; the sequence is HALIGRKAPS…FRTVSSADDQ (313 aa). The active-site Proton acceptor; for dehydratase activity is H974. Residues 1092–1254 are C-terminal hotdog fold; the sequence is AGVIEHDMDN…FRTVSSADDQ (163 aa). D1161 serves as the catalytic Proton donor; for dehydratase activity. The segment at 1407–1600 is methyltransferase (CMet) domain; it reads SKIIGYLTEN…IPTNYRTDNP (194 aa). The segment at 1816–2127 is enoylreductase (ER) domain; sequence GSPDTIYFRR…SRDHIGRLVV (312 aa). Residues 2152–2327 are ketoreductase (KR) domain; the sequence is ATYLVAGGTR…YTVSIGLPVV (176 aa). In terms of domain architecture, Carrier spans 2433-2510; the sequence is DPLTGLIEAL…ALAVNILAQR (78 aa). At S2470 the chain carries O-(pantetheine 4'-phosphoryl)serine.

It participates in mycotoxin biosynthesis. Highly reducing polyketide synthase; part of the gene cluster that mediates the biosynthesis of the host-selective toxins (HSTs) ACR-toxins responsible for brown spot of rough lemon disease by the rough lemon pathotype. ACR-toxins cause uncoupling of mitochondrial oxidative-phosphorylation similar to that of classic protonophore. The structure of the major form of ACR-toxin (ACR-toxin I) consists of an alpha-dihydropyrone ring in a 19-carbon polyalcohol, a typical polyketide structure. Minor toxins were characterized as having a pyrone ring with polyalcohol side chains different in length and showing weaker toxicity. The highly reducing polyketide synthase ACRTS2 has all necessary enzymatic domains for multiple cycles of condensation and beta-keto processing. The cytochrome P450 monooxygenase ACRTS1 has also been shown to be essential for ACR-toxin biosynthesis, however its exact role in the pathway has not been elucidated yet. The protein is Highly reducing polyketide synthase ACRTS2 of Alternaria alternata (Alternaria rot fungus).